Here is a 354-residue protein sequence, read N- to C-terminus: Chorismate synthase (354 aa).

Position 46 (Arg-46) interacts with NADP(+). Residues 123 to 125 (RSS), 239 to 240 (NA), Gly-284, 299 to 303 (KPVAT), and Arg-325 each bind FMN.

This sequence belongs to the chorismate synthase family. Homotetramer. Requires FMNH2 as cofactor.

It carries out the reaction 5-O-(1-carboxyvinyl)-3-phosphoshikimate = chorismate + phosphate. It participates in metabolic intermediate biosynthesis; chorismate biosynthesis; chorismate from D-erythrose 4-phosphate and phosphoenolpyruvate: step 7/7. In terms of biological role, catalyzes the anti-1,4-elimination of the C-3 phosphate and the C-6 proR hydrogen from 5-enolpyruvylshikimate-3-phosphate (EPSP) to yield chorismate, which is the branch point compound that serves as the starting substrate for the three terminal pathways of aromatic amino acid biosynthesis. This reaction introduces a second double bond into the aromatic ring system. The polypeptide is Chorismate synthase (Azobacteroides pseudotrichonymphae genomovar. CFP2).